A 261-amino-acid chain; its full sequence is Proteasome subunit alpha type-4 (261 aa).

Ser-13 and Ser-75 each carry phosphoserine. Lys-127 is modified (N6-acetyllysine). At Ser-173 the chain carries Phosphoserine. Lys-176 carries the post-translational modification N6-acetyllysine. Residues His-240–Lys-261 form a disordered region.

This sequence belongs to the peptidase T1A family. The 26S proteasome consists of a 20S proteasome core and two 19S regulatory subunits. The 20S proteasome core is a barrel-shaped complex made of 28 subunits that are arranged in four stacked rings. The two outer rings are each formed by seven alpha subunits, and the two inner rings are formed by seven beta subunits. The proteolytic activity is exerted by three beta-subunits PSMB5, PSMB6 and PSMB7. As to expression, ubiquitous.

It is found in the cytoplasm. Its subcellular location is the nucleus. In terms of biological role, component of the 20S core proteasome complex involved in the proteolytic degradation of most intracellular proteins. This complex plays numerous essential roles within the cell by associating with different regulatory particles. Associated with two 19S regulatory particles, forms the 26S proteasome and thus participates in the ATP-dependent degradation of ubiquitinated proteins. The 26S proteasome plays a key role in the maintenance of protein homeostasis by removing misfolded or damaged proteins that could impair cellular functions, and by removing proteins whose functions are no longer required. Associated with the PA200 or PA28, the 20S proteasome mediates ubiquitin-independent protein degradation. This type of proteolysis is required in several pathways including spermatogenesis (20S-PA200 complex) or generation of a subset of MHC class I-presented antigenic peptides (20S-PA28 complex). The protein is Proteasome subunit alpha type-4 (Psma4) of Rattus norvegicus (Rat).